Here is a 294-residue protein sequence, read N- to C-terminus: tRNA dimethylallyltransferase (294 aa).

10 to 17 (GPTAVGKT) lines the ATP pocket. Position 12-17 (12-17 (TAVGKT)) interacts with substrate. Residues 35–38 (DSQQ) form an interaction with substrate tRNA region.

Belongs to the IPP transferase family. Monomer. Requires Mg(2+) as cofactor.

The enzyme catalyses adenosine(37) in tRNA + dimethylallyl diphosphate = N(6)-dimethylallyladenosine(37) in tRNA + diphosphate. Catalyzes the transfer of a dimethylallyl group onto the adenine at position 37 in tRNAs that read codons beginning with uridine, leading to the formation of N6-(dimethylallyl)adenosine (i(6)A). In Streptococcus gordonii (strain Challis / ATCC 35105 / BCRC 15272 / CH1 / DL1 / V288), this protein is tRNA dimethylallyltransferase.